We begin with the raw amino-acid sequence, 393 residues long: L-rhamnonate dehydratase (393 aa).

Substrate contacts are provided by histidine 22 and arginine 48. Mg(2+) contacts are provided by aspartate 214, glutamate 241, and glutamate 269. Histidine 319 (proton acceptor) is an active-site residue. Residue glutamate 339 coordinates substrate.

The protein belongs to the mandelate racemase/muconate lactonizing enzyme family. RhamD subfamily. In terms of assembly, homooctamer; tetramer of dimers. Requires Mg(2+) as cofactor.

The catalysed reaction is L-rhamnonate = 2-dehydro-3-deoxy-L-rhamnonate + H2O. Its function is as follows. Catalyzes the dehydration of L-rhamnonate to 2-keto-3-deoxy-L-rhamnonate (KDR). The chain is L-rhamnonate dehydratase from Azorhizobium caulinodans (strain ATCC 43989 / DSM 5975 / JCM 20966 / LMG 6465 / NBRC 14845 / NCIMB 13405 / ORS 571).